Here is a 311-residue protein sequence, read N- to C-terminus: Interleukin-20 receptor subunit beta (311 aa).

A signal peptide spans 1-29 (MQTFTMVLEEIWTSLFMWFFYALIPCLLT). At 30-233 (DEVAILPAPQ…VEVQGEAIPL (204 aa)) the chain is on the extracellular side. Fibronectin type-III domains lie at 37 to 136 (APQN…RNST) and 144 to 228 (EITK…EVQG). Asparagine 40 is a glycosylation site (N-linked (GlcNAc...) asparagine). A disulfide bridge connects residues cysteine 89 and cysteine 97. N-linked (GlcNAc...) asparagine glycosylation is present at asparagine 134. Cysteine 202 and cysteine 223 form a disulfide bridge. Residues 234 to 254 (VLALFAFVGFMLILVVVPLFV) traverse the membrane as a helical segment. Residues 255 to 311 (WKMGRLLQYSCCPVVVLPDTLKITNSPQKLISCRREEVDACATAVMSPEELLRAWIS) lie on the Cytoplasmic side of the membrane.

It belongs to the type II cytokine receptor family. As to quaternary structure, heterodimer with IL20RA and heterodimer with IL22RA1. As to expression, widely expressed with highest levels in skin and testis. Highly expressed in psoriatic skin.

The protein localises to the membrane. Functionally, the IL20RA/IL20RB dimer is a receptor for IL19, IL20 and IL24. The IL22RA1/IL20RB dimer is a receptor for IL20 and IL24. The chain is Interleukin-20 receptor subunit beta (IL20RB) from Homo sapiens (Human).